The chain runs to 120 residues: Protein FAM241B (120 aa).

The tract at residues 12–59 (QDDDPRVRTTTQHRSSSSQQGFFNRGHGAPPGGPGPRQQQAGARLGAA) is disordered. Low complexity-rich tracts occupy residues 19 to 39 (RTTT…RGHG) and 47 to 59 (PRQQ…LGAA). Phosphoserine is present on S61. Residues 91 to 111 (ILLLFLLMMLGVRGLLLVGLV) traverse the membrane as a helical segment.

Belongs to the FAM241 family.

The protein localises to the membrane. In terms of biological role, may play a role in lysosome homeostasis. This Mus musculus (Mouse) protein is Protein FAM241B.